A 264-amino-acid polypeptide reads, in one-letter code: Acyl-[acyl-carrier-protein]--UDP-N-acetylglucosamine O-acyltransferase (264 aa).

The protein belongs to the transferase hexapeptide repeat family. LpxA subfamily. In terms of assembly, homotrimer.

It is found in the cytoplasm. The catalysed reaction is a (3R)-hydroxyacyl-[ACP] + UDP-N-acetyl-alpha-D-glucosamine = a UDP-3-O-[(3R)-3-hydroxyacyl]-N-acetyl-alpha-D-glucosamine + holo-[ACP]. The protein operates within glycolipid biosynthesis; lipid IV(A) biosynthesis; lipid IV(A) from (3R)-3-hydroxytetradecanoyl-[acyl-carrier-protein] and UDP-N-acetyl-alpha-D-glucosamine: step 1/6. Its function is as follows. Involved in the biosynthesis of lipid A, a phosphorylated glycolipid that anchors the lipopolysaccharide to the outer membrane of the cell. The protein is Acyl-[acyl-carrier-protein]--UDP-N-acetylglucosamine O-acyltransferase of Rickettsia peacockii (strain Rustic).